Consider the following 469-residue polypeptide: 3-isopropylmalate dehydratase large subunit 1 (469 aa).

The [4Fe-4S] cluster site is built by C344, C404, and C407.

This sequence belongs to the aconitase/IPM isomerase family. LeuC type 1 subfamily. As to quaternary structure, heterodimer of LeuC and LeuD. Requires [4Fe-4S] cluster as cofactor.

The enzyme catalyses (2R,3S)-3-isopropylmalate = (2S)-2-isopropylmalate. Its pathway is amino-acid biosynthesis; L-leucine biosynthesis; L-leucine from 3-methyl-2-oxobutanoate: step 2/4. In terms of biological role, catalyzes the isomerization between 2-isopropylmalate and 3-isopropylmalate, via the formation of 2-isopropylmaleate. This is 3-isopropylmalate dehydratase large subunit 1 from Rubrobacter xylanophilus (strain DSM 9941 / JCM 11954 / NBRC 16129 / PRD-1).